Here is a 515-residue protein sequence, read N- to C-terminus: Glycosyltransferase family 92 protein F59C6.8 (515 aa).

A helical membrane pass occupies residues 18-38 (LFIFIAVCLGFLIAVTILAGL). The region spanning 163 to 456 (RKVVACFSPL…IEVCYNRIFY (294 aa)) is the GT92 domain.

The protein belongs to the glycosyltransferase 92 family.

The protein resides in the membrane. This Caenorhabditis elegans protein is Glycosyltransferase family 92 protein F59C6.8.